The primary structure comprises 276 residues: 4-deoxy-L-threo-5-hexosulose-uronate ketol-isomerase (276 aa).

Zn(2+) contacts are provided by His194, His196, Glu201, and His243.

This sequence belongs to the KduI family. The cofactor is Zn(2+).

The catalysed reaction is 5-dehydro-4-deoxy-D-glucuronate = 3-deoxy-D-glycero-2,5-hexodiulosonate. The protein operates within glycan metabolism; pectin degradation; 2-dehydro-3-deoxy-D-gluconate from pectin: step 4/5. Its function is as follows. Catalyzes the isomerization of 5-dehydro-4-deoxy-D-glucuronate to 3-deoxy-D-glycero-2,5-hexodiulosonate. The chain is 4-deoxy-L-threo-5-hexosulose-uronate ketol-isomerase from Shouchella clausii (strain KSM-K16) (Alkalihalobacillus clausii).